The following is a 589-amino-acid chain: Guanylate-binding protein 2 (589 aa).

Residues 1-309 (MASEIHMSEP…GAISNGSLPC (309 aa)) form a GTPase domain (Globular) region. The 242-residue stretch at 35–276 (TQPVVVVAIV…FTSYILSYSS (242 aa)) folds into the GB1/RHD3-type G domain. GTP is bound by residues 45–52 (GLYRTGKS), 181–182 (RD), and Leu-245. Cys-586 is modified (cysteine methyl ester). The S-geranylgeranyl cysteine moiety is linked to residue Cys-586. The propeptide at 587-589 (TIL) is removed in mature form.

Belongs to the TRAFAC class dynamin-like GTPase superfamily. GB1/RHD3 GTPase family. GB1 subfamily. As to quaternary structure, homodimer; homodimerization occurs upon GTP-binding and is required for the association with membranous structures. Heterodimer with other family members, including GBP1, GBP3, GBP4 and GBP5. Isoprenylation is required for proper subcellular location.

The protein resides in the cytoplasmic vesicle membrane. The protein localises to the golgi apparatus membrane. Its subcellular location is the cytoplasm. It localises to the perinuclear region. The catalysed reaction is GTP + H2O = GDP + phosphate + H(+). Its function is as follows. Interferon (IFN)-inducible GTPase that plays important roles in innate immunity against a diverse range of bacterial, viral and protozoan pathogens. Hydrolyzes GTP to GMP in 2 consecutive cleavage reactions, but the major reaction product is GDP. Following infection, recruited to the pathogen-containing vacuoles or vacuole-escaped bacteria and acts as a positive regulator of inflammasome assembly by promoting the release of inflammasome ligands from bacteria. Acts by promoting lysis of pathogen-containing vacuoles, releasing pathogens into the cytosol. Following pathogen release in the cytosol, promotes recruitment of proteins that mediate bacterial cytolysis, such as Gm12250/Irgb10: this liberates ligands that are detected by inflammasomes, such as lipopolysaccharide (LPS) that activates the non-canonical CASP4/CASP11 inflammasome or double-stranded DNA (dsDNA) that activates the AIM2 inflammasome. Confers protection to the protozoan pathogen Toxoplasma gondii. Independently of its GTPase activity, acts as an inhibitor of various viruses infectivity by inhibiting FURIN-mediated maturation of viral envelope proteins. The chain is Guanylate-binding protein 2 from Mus musculus (Mouse).